Consider the following 739-residue polypeptide: Endoglucanase F (739 aa).

The N-terminal stretch at 1-27 (MKKILAFLLTVALVAVVAIPQAVVSFA) is a signal peptide. A catalytic region spans residues 28–470 (ADFNYGEALQ…AKMYEKYGGE (443 aa)). Asp84 functions as the Nucleophile in the catalytic mechanism. Residues His400, Asp438, and Glu447 contribute to the active site. The region spanning 480-639 (TPGEEFYVEA…NVRVWGKVPD (160 aa)) is the CBM3 domain. The region spanning 664 to 737 (PGIMLGDVNF…ILKLIEKFPA (74 aa)) is the Dockerin domain.

Belongs to the glycosyl hydrolase 9 (cellulase E) family. Ca(2+) serves as cofactor.

The enzyme catalyses Endohydrolysis of (1-&gt;4)-beta-D-glucosidic linkages in cellulose, lichenin and cereal beta-D-glucans.. This enzyme catalyzes the endohydrolysis of 1,4-beta-glucosidic linkages in cellulose, lichenin and cereal beta-D-glucans. This chain is Endoglucanase F (celF), found in Acetivibrio thermocellus (strain ATCC 27405 / DSM 1237 / JCM 9322 / NBRC 103400 / NCIMB 10682 / NRRL B-4536 / VPI 7372) (Clostridium thermocellum).